The sequence spans 91 residues: Small ribosomal subunit protein uS15c (91 aa).

This sequence belongs to the universal ribosomal protein uS15 family. In terms of assembly, part of the 30S ribosomal subunit.

The protein localises to the plastid. It localises to the chloroplast. This Cicer arietinum (Chickpea) protein is Small ribosomal subunit protein uS15c (rps15).